Reading from the N-terminus, the 883-residue chain is Alanine--tRNA ligase (883 aa).

His-565, His-569, Cys-675, and His-679 together coordinate Zn(2+).

It belongs to the class-II aminoacyl-tRNA synthetase family. Requires Zn(2+) as cofactor.

The protein localises to the cytoplasm. It catalyses the reaction tRNA(Ala) + L-alanine + ATP = L-alanyl-tRNA(Ala) + AMP + diphosphate. In terms of biological role, catalyzes the attachment of alanine to tRNA(Ala) in a two-step reaction: alanine is first activated by ATP to form Ala-AMP and then transferred to the acceptor end of tRNA(Ala). Also edits incorrectly charged Ser-tRNA(Ala) and Gly-tRNA(Ala) via its editing domain. This is Alanine--tRNA ligase from Rhodospirillum rubrum (strain ATCC 11170 / ATH 1.1.1 / DSM 467 / LMG 4362 / NCIMB 8255 / S1).